Reading from the N-terminus, the 215-residue chain is Cytochrome b6 (215 aa).

A helical transmembrane segment spans residues 32 to 52 (IFYCLGGITLVCFLIQFATGF). Cys-35 provides a ligand contact to heme c. His-86 and His-100 together coordinate heme b. 3 consecutive transmembrane segments (helical) span residues 90–110 (ASMM…TGGF), 116–136 (LTWV…VTGY), and 186–206 (LHTF…FLMI). Positions 187 and 202 each coordinate heme b.

The protein belongs to the cytochrome b family. PetB subfamily. As to quaternary structure, the 4 large subunits of the cytochrome b6-f complex are cytochrome b6, subunit IV (17 kDa polypeptide, PetD), cytochrome f and the Rieske protein, while the 4 small subunits are PetG, PetL, PetM and PetN. The complex functions as a dimer. It depends on heme b as a cofactor. Heme c is required as a cofactor.

It is found in the cellular thylakoid membrane. Functionally, component of the cytochrome b6-f complex, which mediates electron transfer between photosystem II (PSII) and photosystem I (PSI), cyclic electron flow around PSI, and state transitions. The protein is Cytochrome b6 of Synechococcus sp. (strain JA-3-3Ab) (Cyanobacteria bacterium Yellowstone A-Prime).